The primary structure comprises 289 residues: Cytochrome bc1 complex cytochrome c subunit (289 aa).

Residues 1–11 (MKKLGFTRSSR) are compositionally biased toward basic residues. The segment at 1-28 (MKKLGFTRSSRRCSQPQEREQESERSRR) is disordered. Residues 37–55 (GLLLLVALTVSGGLAAVLT) traverse the membrane as a helical segment. Cytochrome c domains are found at residues 69 to 149 (ALLR…QANG) and 170 to 248 (TDLG…RTVI). Heme c is bound by residues Cys82, Cys85, His86, Cys183, Cys186, and His187. The chain crosses the membrane as a helical span at residues 267 to 287 (GMAIWIIGMVTAIGLALWIGA).

In terms of assembly, the cytochrome bc1 complex is composed of a cytochrome b (QcrB), the Rieske iron-sulfur protein (QcrA) and a diheme cytochrome c (QcrC) subunit. Post-translationally, binds 2 heme c groups covalently per subunit.

Its subcellular location is the cell membrane. The enzyme catalyses a quinol + 2 Fe(III)-[cytochrome c](out) = a quinone + 2 Fe(II)-[cytochrome c](out) + 2 H(+)(out). In terms of biological role, cytochrome b subunit of the cytochrome bc1 complex, an essential component of the respiratory electron transport chain required for ATP synthesis. The bc1 complex catalyzes the oxidation of ubiquinol and the reduction of cytochrome c in the respiratory chain. The bc1 complex operates through a Q-cycle mechanism that couples electron transfer to generation of the proton gradient that drives ATP synthesis. This is Cytochrome bc1 complex cytochrome c subunit (qcrC) from Mycobacterium leprae (strain TN).